The sequence spans 198 residues: Probable chemoreceptor glutamine deamidase CheD (198 aa).

The protein belongs to the CheD family.

It catalyses the reaction L-glutaminyl-[protein] + H2O = L-glutamyl-[protein] + NH4(+). Probably deamidates glutamine residues to glutamate on methyl-accepting chemotaxis receptors (MCPs), playing an important role in chemotaxis. This Xanthomonas campestris pv. campestris (strain 8004) protein is Probable chemoreceptor glutamine deamidase CheD.